Consider the following 198-residue polypeptide: Phosphoheptose isomerase (198 aa).

Residues 40–198 form the SIS domain; that stretch reads IVTALRSGRK…IEAALMQDLS (159 aa). 55 to 57 provides a ligand contact to substrate; sequence NGG. Positions 64 and 68 each coordinate Zn(2+). Residues glutamate 68, 97–98, 123–125, serine 128, and glutamine 175 contribute to the substrate site; these read ND and STS. Positions 175 and 183 each coordinate Zn(2+).

It belongs to the SIS family. GmhA subfamily. Homotetramer. Requires Zn(2+) as cofactor.

It localises to the cytoplasm. The enzyme catalyses 2 D-sedoheptulose 7-phosphate = D-glycero-alpha-D-manno-heptose 7-phosphate + D-glycero-beta-D-manno-heptose 7-phosphate. It participates in carbohydrate biosynthesis; D-glycero-D-manno-heptose 7-phosphate biosynthesis; D-glycero-alpha-D-manno-heptose 7-phosphate and D-glycero-beta-D-manno-heptose 7-phosphate from sedoheptulose 7-phosphate: step 1/1. Catalyzes the isomerization of sedoheptulose 7-phosphate in D-glycero-D-manno-heptose 7-phosphate. This is Phosphoheptose isomerase from Bradyrhizobium sp. (strain BTAi1 / ATCC BAA-1182).